The following is an 86-amino-acid chain: Large ribosomal subunit protein uL30m (86 aa).

Residues Q67–D86 form a disordered region.

The protein belongs to the universal ribosomal protein uL30 family. As to quaternary structure, component of the mitochondrial large ribosomal subunit (mt-LSU). Mature yeast 74S mitochondrial ribosomes consist of a small (37S) and a large (54S) subunit. The 37S small subunit contains a 15S ribosomal RNA (15S mt-rRNA) and 34 different proteins. The 54S large subunit contains a 21S rRNA (21S mt-rRNA) and 46 different proteins.

It is found in the mitochondrion. Functionally, component of the mitochondrial ribosome (mitoribosome), a dedicated translation machinery responsible for the synthesis of mitochondrial genome-encoded proteins, including at least some of the essential transmembrane subunits of the mitochondrial respiratory chain. The mitoribosomes are attached to the mitochondrial inner membrane and translation products are cotranslationally integrated into the membrane. In Saccharomyces cerevisiae (strain ATCC 204508 / S288c) (Baker's yeast), this protein is Large ribosomal subunit protein uL30m (MRPL33).